The following is a 638-amino-acid chain: Chaperone protein DnaK (638 aa).

A Phosphothreonine; by autocatalysis modification is found at threonine 198. Residues 603–618 (QQAQAQQAQGADADAQ) show a composition bias toward low complexity. Residues 603–638 (QQAQAQQAQGADADAQQSKEDDVVDAEFEEVKDDKK) form a disordered region. The segment covering 624-638 (DVVDAEFEEVKDDKK) has biased composition (acidic residues).

The protein belongs to the heat shock protein 70 family.

Its function is as follows. Acts as a chaperone. This chain is Chaperone protein DnaK, found in Vibrio campbellii (strain ATCC BAA-1116).